The following is a 105-amino-acid chain: Large ribosomal subunit protein uL24 (105 aa).

The protein belongs to the universal ribosomal protein uL24 family. In terms of assembly, part of the 50S ribosomal subunit.

Functionally, one of two assembly initiator proteins, it binds directly to the 5'-end of the 23S rRNA, where it nucleates assembly of the 50S subunit. In terms of biological role, one of the proteins that surrounds the polypeptide exit tunnel on the outside of the subunit. The polypeptide is Large ribosomal subunit protein uL24 (Sorangium cellulosum (strain So ce56) (Polyangium cellulosum (strain So ce56))).